Here is a 292-residue protein sequence, read N- to C-terminus: UPF0749 protein Mb1856 (292 aa).

The N-terminal stretch at 1–28 (MSENRPEPVAAETSAATTARHSQADAGA) is a signal peptide. The tract at residues 1–30 (MSENRPEPVAAETSAATTARHSQADAGAHD) is disordered. The next 3 helical transmembrane spans lie at 68 to 88 (VFGT…VTQV), 152 to 172 (AALS…MITI), and 229 to 249 (VLSP…AAAM).

It belongs to the UPF0749 family.

It localises to the cell membrane. In Mycobacterium bovis (strain ATCC BAA-935 / AF2122/97), this protein is UPF0749 protein Mb1856.